Consider the following 392-residue polypeptide: MEIVQEGIAKIIVPEIPKTVSSDMPVFYNPRMRVNRDLAVLGLEYLCKKLGRPVKVADPLSASGIRAIRFLLETSCVEKAYANDISSKAIEIMKENFKLNNIPEDRYEIHGMEANFFLRKEWGFGFDYVDLDPFGTPVPFIESVALSMKRGGILSLTATDTAPLSGTYPKTCMRRYMARPLRNEFKHEVGIRILIKKVIELAAQYDIAMIPIFAYSHLHYFKLFFVKERGVEKVDKLIEQFGYIQYCFNCMNREVVTDLYKFKEKCPHCGSKFHIGGPLWIGKLWDEEFTNFLYEEAQKREEIEKETKRILKLIKEESQLQTVGFYVLSKLAEKVKLPAQPPIRIAVKFFNGVRTHFVGDGFRTNLSFEEVMKKMEELKEKQKEFLEKKKQG.

The Trm1 methyltransferase domain maps to 2-375; sequence EIVQEGIAKI…LSFEEVMKKM (374 aa). The S-adenosyl-L-methionine site is built by Arg36, Arg66, Asp84, Glu113, and Ala114. Zn(2+) is bound by residues Cys247, Cys250, Cys266, and Cys269.

The protein belongs to the class I-like SAM-binding methyltransferase superfamily. Trm1 family.

The catalysed reaction is guanosine(26)/guanosine(27) in tRNA + 4 S-adenosyl-L-methionine = N(2)-dimethylguanosine(26)/N(2)-dimethylguanosine(27) in tRNA + 4 S-adenosyl-L-homocysteine + 4 H(+). Functionally, dimethylates the guanine residues at position 26 and 27 of one or more tRNAs using S-adenosyl-L-methionine as donor of the methyl groups. This is tRNA (guanine(26)-N(2)/guanine(27)-N(2))-dimethyltransferase from Aquifex aeolicus (strain VF5).